We begin with the raw amino-acid sequence, 130 residues long: uncharacterized protein (130 aa).

The N-terminal stretch at 1 to 20 is a signal peptide; it reads MFNCLTKLVILVCLKYVAKA.

This is an uncharacterized protein from Saccharomyces cerevisiae (strain ATCC 204508 / S288c) (Baker's yeast).